Consider the following 407-residue polypeptide: Transcriptional regulator UL34 (407 aa).

Disordered regions lie at residues 268 to 330 and 388 to 407; these read AAGP…EELF and SPSVTPALTPVTSPITPLCI. Residues 273–286 show a composition bias toward acidic residues; sequence EADENNDEGEEDDD. Basic and acidic residues predominate over residues 287–301; the sequence is ELRHSDPAPLHESKK. The span at 302-312 shows a compositional bias: basic residues; the sequence is PRNARRPRTRV.

This sequence belongs to the HHV-5 UL34 protein family.

The protein localises to the host nucleus. In terms of biological role, acts as a transcriptional repressor of the US3 gene expression through a specific DNA sequence named the transcriptional repressive element (tre). The chain is Transcriptional regulator UL34 (UL34) from Human cytomegalovirus (strain Towne) (HHV-5).